The primary structure comprises 604 residues: Glutamine--fructose-6-phosphate aminotransferase [isomerizing] (604 aa).

Cysteine 2 acts as the Nucleophile; for GATase activity in catalysis. One can recognise a Glutamine amidotransferase type-2 domain in the interval 2–218; it reads CGIVGVVGNR…DKELVILTKD (217 aa). 2 consecutive SIS domains span residues 284–423 and 456–594; these read IITS…ANGK and VQAL…VDKP. The For Fru-6P isomerization activity role is filled by lysine 599.

In terms of assembly, homodimer.

The protein localises to the cytoplasm. The catalysed reaction is D-fructose 6-phosphate + L-glutamine = D-glucosamine 6-phosphate + L-glutamate. Functionally, catalyzes the first step in hexosamine metabolism, converting fructose-6P into glucosamine-6P using glutamine as a nitrogen source. This chain is Glutamine--fructose-6-phosphate aminotransferase [isomerizing], found in Streptococcus pyogenes serotype M18 (strain MGAS8232).